The primary structure comprises 2193 residues: Genome polyprotein (2193 aa).

Residue Gly-2 is the site of N-myristoyl glycine; by host attachment. Topologically, residues Gly-2 to Gln-1503 are cytoplasmic. The tract at residues Gln-565–Val-582 is amphipathic alpha-helix. Active-site for protease 2A activity residues include His-880 and Asp-898. Zn(2+) contacts are provided by Cys-915 and Cys-917. The For protease 2A activity role is filled by Cys-969. Residues Cys-975 and His-977 each coordinate Zn(2+). A membrane-binding region spans residues Ser-1109–Gln-1181. Residues Ser-1109–Thr-1247 form an oligomerization region. Residues Ala-1130–Gln-1134 are RNA-binding. Residues Glu-1213–Asn-1369 form the SF3 helicase domain. Cys-1377, Cys-1389, and Cys-1394 together coordinate Zn(2+). The C4-type; degenerate zinc finger occupies Cys-1377–Cys-1394. The tract at residues Glu-1421–Val-1428 is RNA-binding. The tract at residues Leu-1432 to Gln-1437 is oligomerization. The stretch at Ala-1504–Tyr-1519 is an intramembrane region. Topologically, residues Lys-1520–Phe-2193 are cytoplasmic. Tyr-1529 carries the post-translational modification O-(5'-phospho-RNA)-tyrosine. Positions Gly-1549–Phe-1727 constitute a Peptidase C3 domain. Residues His-1588, Glu-1619, and Cys-1695 each act as for protease 3C activity in the active site. The RdRp catalytic domain maps to Gly-1958–Leu-2074. Mg(2+) contacts are provided by Asp-1964 and Asp-2060.

Belongs to the picornaviruses polyprotein family. Interacts with capsid protein VP1 and capsid protein VP3 to form heterotrimeric protomers. In terms of assembly, interacts with capsid protein VP0, and capsid protein VP3 to form heterotrimeric protomers. Five protomers subsequently associate to form pentamers which serve as building blocks for the capsid. Interacts with capsid protein VP2, capsid protein VP3 and capsid protein VP4 following cleavage of capsid protein VP0. As to quaternary structure, interacts with capsid protein VP1 and capsid protein VP3 in the mature capsid. Interacts with host CD55; this interaction promotes virus attachment to the host cell and subsequent internalization. Interacts with capsid protein VP0 and capsid protein VP1 to form heterotrimeric protomers. Five protomers subsequently associate to form pentamers which serve as building blocks for the capsid. Interacts with capsid protein VP4 in the mature capsid. Interacts with protein 2C; this interaction may be important for virion morphogenesis. Interacts with host CD55; this interaction promotes virus attachment to the host cell and subsequent internalization. In terms of assembly, interacts with capsid protein VP1 and capsid protein VP3. As to quaternary structure, homodimer. Homohexamer; forms a hexameric ring structure with 6-fold symmetry characteristic of AAA+ ATPases. Interacts (via N-terminus) with host RTN3 (via reticulon domain); this interaction is important for viral replication. Interacts with capsid protein VP3; this interaction may be important for virion morphogenesis. In terms of assembly, interacts with protein 3CD. As to quaternary structure, homodimer. Interacts with host GBF1. Interacts (via GOLD domain) with host ACBD3 (via GOLD domain); this interaction allows the formation of a viral protein 3A/ACBD3 heterotetramer with a 2:2 stoichiometry, which will stimulate the recruitment of host PI4KB in order to synthesize PI4P at the viral RNA replication sites. Interacts with RNA-directed RNA polymerase. In terms of assembly, interacts with protein 3AB and with RNA-directed RNA polymerase. As to quaternary structure, interacts with Viral protein genome-linked and with protein 3CD. Mg(2+) serves as cofactor. In terms of processing, specific enzymatic cleavages in vivo by the viral proteases yield processing intermediates and the mature proteins. Myristoylation is required for the formation of pentamers during virus assembly. Further assembly of 12 pentamers and a molecule of genomic RNA generates the provirion. Post-translationally, during virion maturation, immature virions are rendered infectious following cleavage of VP0 into VP4 and VP2. This maturation seems to be an autocatalytic event triggered by the presence of RNA in the capsid and it is followed by a conformational change infectious virion. In terms of processing, myristoylation is required during RNA encapsidation and formation of the mature virus particle. VPg is uridylylated by the polymerase into VPg-pUpU. This acts as a nucleotide-peptide primer for the genomic RNA replication.

The protein resides in the virion. It is found in the host cytoplasm. It localises to the host cytoplasmic vesicle membrane. Its subcellular location is the host nucleus. It carries out the reaction a ribonucleoside 5'-triphosphate + H2O = a ribonucleoside 5'-diphosphate + phosphate + H(+). The enzyme catalyses Selective cleavage of Tyr-|-Gly bond in the picornavirus polyprotein.. It catalyses the reaction RNA(n) + a ribonucleoside 5'-triphosphate = RNA(n+1) + diphosphate. The catalysed reaction is Selective cleavage of Gln-|-Gly bond in the poliovirus polyprotein. In other picornavirus reactions Glu may be substituted for Gln, and Ser or Thr for Gly.. Replication or transcription is subject to high level of random mutations by the nucleotide analog ribavirin. Functionally, forms an icosahedral capsid of pseudo T=3 symmetry with capsid proteins VP2 and VP3. The capsid is 300 Angstroms in diameter, composed of 60 copies of each capsid protein and enclosing the viral positive strand RNA genome. Capsid protein VP1 mainly forms the vertices of the capsid. Capsid protein VP1 interacts with host cell receptor to provide virion attachment to target host cells. This attachment induces virion internalization. Tyrosine kinases are probably involved in the entry process. After binding to its receptor, the capsid undergoes conformational changes. Capsid protein VP1 N-terminus (that contains an amphipathic alpha-helix) and capsid protein VP4 are externalized. Together, they shape a pore in the host membrane through which viral genome is translocated to host cell cytoplasm. Its function is as follows. Forms an icosahedral capsid of pseudo T=3 symmetry with capsid proteins VP2 and VP3. The capsid is 300 Angstroms in diameter, composed of 60 copies of each capsid protein and enclosing the viral positive strand RNA genome. In terms of biological role, lies on the inner surface of the capsid shell. After binding to the host receptor, the capsid undergoes conformational changes. Capsid protein VP4 is released, Capsid protein VP1 N-terminus is externalized, and together, they shape a pore in the host membrane through which the viral genome is translocated into the host cell cytoplasm. Component of immature procapsids, which is cleaved into capsid proteins VP4 and VP2 after maturation. Allows the capsid to remain inactive before the maturation step. Functionally, cysteine protease that cleaves viral polyprotein and specific host proteins. It is responsible for the autocatalytic cleavage between the P1 and P2 regions, which is the first cleavage occurring in the polyprotein. Also cleaves the host translation initiation factor EIF4G1, in order to shut down the capped cellular mRNA translation. Inhibits the host nucleus-cytoplasm protein and RNA trafficking by cleaving host members of the nuclear pores. Counteracts stress granule formation probably by antagonizing its assembly or promoting its dissassembly. Its function is as follows. Plays an essential role in the virus replication cycle by acting as a viroporin. Creates a pore in the host endoplasmic reticulum and as a consequence releases Ca2+ in the cytoplasm of infected cell. In turn, high levels of cytoplasmic calcium may trigger membrane trafficking and transport of viral ER-associated proteins to viroplasms, sites of viral genome replication. In terms of biological role, induces and associates with structural rearrangements of intracellular membranes. Displays RNA-binding, nucleotide binding and NTPase activities. May play a role in virion morphogenesis and viral RNA encapsidation by interacting with the capsid protein VP3. Localizes the viral replication complex to the surface of membranous vesicles. Together with protein 3CD binds the Cis-Active RNA Element (CRE) which is involved in RNA synthesis initiation. Acts as a cofactor to stimulate the activity of 3D polymerase, maybe through a nucleid acid chaperone activity. Functionally, localizes the viral replication complex to the surface of membranous vesicles. It inhibits host cell endoplasmic reticulum-to-Golgi apparatus transport and causes the disassembly of the Golgi complex, possibly through GBF1 interaction. This would result in depletion of MHC, trail receptors and IFN receptors at the host cell surface. Plays an essential role in viral RNA replication by recruiting ACBD3 and PI4KB at the viral replication sites, thereby allowing the formation of the rearranged membranous structures where viral replication takes place. Its function is as follows. Acts as a primer for viral RNA replication and remains covalently bound to viral genomic RNA. VPg is uridylylated prior to priming replication into VPg-pUpU. The oriI viral genomic sequence may act as a template for this. The VPg-pUpU is then used as primer on the genomic RNA poly(A) by the RNA-dependent RNA polymerase to replicate the viral genome. During genome replication, the VPg-RNA linkage is removed by the host TDP2, thereby accelerating replication. During the late stage of the replication cycle, host TDP2 is excluded from sites of viral RNA synthesis and encapsidation, allowing for the generation of progeny virions. In terms of biological role, involved in the viral replication complex and viral polypeptide maturation. It exhibits protease activity with a specificity and catalytic efficiency that is different from protease 3C. Protein 3CD lacks polymerase activity. Protein 3CD binds to the 5'UTR of the viral genome. Replicates the viral genomic RNA on the surface of intracellular membranes. May form linear arrays of subunits that propagate along a strong head-to-tail interaction called interface-I. Covalently attaches UMP to a tyrosine of VPg, which is used to prime RNA synthesis. The positive stranded RNA genome is first replicated at virus induced membranous vesicles, creating a dsRNA genomic replication form. This dsRNA is then used as template to synthesize positive stranded RNA genomes. ss(+)RNA genomes are either translated, replicated or encapsidated. Functionally, major viral protease that mediates proteolytic processing of the polyprotein. Cleaves host EIF5B, contributing to host translation shutoff. Also cleaves host PABPC1, contributing to host translation shutoff. Cleaves host NLRP1, triggers host N-glycine-mediated degradation of the autoinhibitory NLRP1 N-terminal fragment. In Echovirus 12 (strain Travis), this protein is Genome polyprotein.